Here is a 273-residue protein sequence, read N- to C-terminus: Putative phosphoenolpyruvate synthase regulatory protein (273 aa).

153–160 (AVSRAGKT) serves as a coordination point for ADP.

Belongs to the pyruvate, phosphate/water dikinase regulatory protein family. PSRP subfamily.

The catalysed reaction is [pyruvate, water dikinase] + ADP = [pyruvate, water dikinase]-phosphate + AMP + H(+). The enzyme catalyses [pyruvate, water dikinase]-phosphate + phosphate + H(+) = [pyruvate, water dikinase] + diphosphate. Bifunctional serine/threonine kinase and phosphorylase involved in the regulation of the phosphoenolpyruvate synthase (PEPS) by catalyzing its phosphorylation/dephosphorylation. In Xylella fastidiosa (strain 9a5c), this protein is Putative phosphoenolpyruvate synthase regulatory protein.